The sequence spans 535 residues: Serine/threonine-protein kinase C (535 aa).

Residues 12–277 (YRIIETLGRG…AMAQTLQGNF (266 aa)) enclose the Protein kinase domain. ATP contacts are provided by residues 18–26 (LGRGGFGET) and lysine 43. Aspartate 142 (proton acceptor) is an active-site residue. Positions 371 to 535 (NNPPPAVEEP…GEKPIDPEQN (165 aa)) are disordered. Residues 402–421 (SPIPTPATPSPEPTPSPSPS) show a composition bias toward pro residues. Residues 422-435 (PETTSSPTEDTITP) are compositionally biased toward low complexity. Composition is skewed to pro residues over residues 446-464 (APIP…PQPS) and 472-498 (TPAP…PTPQ).

The protein belongs to the protein kinase superfamily. Ser/Thr protein kinase family.

It catalyses the reaction L-seryl-[protein] + ATP = O-phospho-L-seryl-[protein] + ADP + H(+). The enzyme catalyses L-threonyl-[protein] + ATP = O-phospho-L-threonyl-[protein] + ADP + H(+). This is Serine/threonine-protein kinase C (spkC) from Synechocystis sp. (strain ATCC 27184 / PCC 6803 / Kazusa).